Consider the following 466-residue polypeptide: MPHSYDYDAIVIGSGPGGEGAAMGLVKQGARVAVIERYQNVGGGCTHWGTIPSKALRHAVSRIIEFNQNPLYSDHSRLLRSSFADILNHADNVINQQTRMRQGFYERNHCEILQGNARFVDEHTLALDCPDGSVETLTAEKFVIACGSRPYHPTDVDFTHPRIYDSDSILSMHHEPRHVLIYGAGVIGCEYASIFRGMDVKVDLINTRDRLLAFLDQEMSDSLSYHFWNSGVVIRHNEEYEKIEGCDDGVIMHLKSGKKLKADCLLYANGRTGNTDSLALQNIGLETDSRGQLKVNSMYQTAQPHVYAVGDVIGYPSLASAAYDQGRIAAQALVKGEATAHLIEDIPTGIYTIPEISSVGKTEQQLTTMKVPYEVGRAQFKHLARAQIVGMNVGTLKILFHRETKEILGIHCFGERAAEIIHIGQAIMEQKGGGNTIEYFVNTTFNYPTMAEAYRVAALNGLNRLF.

Residue 36-45 (ERYQNVGGGC) participates in FAD binding.

It belongs to the class-I pyridine nucleotide-disulfide oxidoreductase family. Requires FAD as cofactor.

The protein localises to the cytoplasm. It carries out the reaction NAD(+) + NADPH = NADH + NADP(+). Conversion of NADPH, generated by peripheral catabolic pathways, to NADH, which can enter the respiratory chain for energy generation. The polypeptide is Soluble pyridine nucleotide transhydrogenase (Escherichia coli O6:K15:H31 (strain 536 / UPEC)).